The following is a 545-amino-acid chain: ATP synthase subunit alpha (545 aa).

173–180 (GDRQTGKT) is a binding site for ATP.

Belongs to the ATPase alpha/beta chains family. F-type ATPases have 2 components, CF(1) - the catalytic core - and CF(0) - the membrane proton channel. CF(1) has five subunits: alpha(3), beta(3), gamma(1), delta(1), epsilon(1). CF(0) has three main subunits: a(1), b(2) and c(9-12). The alpha and beta chains form an alternating ring which encloses part of the gamma chain. CF(1) is attached to CF(0) by a central stalk formed by the gamma and epsilon chains, while a peripheral stalk is formed by the delta and b chains.

It is found in the cell membrane. The enzyme catalyses ATP + H2O + 4 H(+)(in) = ADP + phosphate + 5 H(+)(out). Produces ATP from ADP in the presence of a proton gradient across the membrane. The alpha chain is a regulatory subunit. The protein is ATP synthase subunit alpha of Clavibacter sepedonicus (Clavibacter michiganensis subsp. sepedonicus).